Consider the following 128-residue polypeptide: Early 3 14.7 kDa protein (128 aa).

This sequence belongs to the adenoviridae E3_15 family. May bind to host IKBKG, OPTN and RRAGA.

The protein resides in the host cytoplasm. The protein localises to the host nucleus. Its function is as follows. May prevent Nf-kappaB activation by immune signals like Tumor necrosis factor, presumably by inhibiting NFKB1 dimer DNA-binding. May act directly at the TNF receptor to inhibit signaling. The sequence is that of Early 3 14.7 kDa protein from Human adenovirus C serotype 2 (HAdV-2).